Reading from the N-terminus, the 271-residue chain is 3-methyl-2-oxobutanoate hydroxymethyltransferase (271 aa).

The Mg(2+) site is built by Asp-49 and Asp-88. Residues 49 to 50, Asp-88, and Lys-118 each bind 3-methyl-2-oxobutanoate; that span reads DS. Glu-120 is a Mg(2+) binding site. Glu-187 acts as the Proton acceptor in catalysis.

Belongs to the PanB family. In terms of assembly, homodecamer; pentamer of dimers. Requires Mg(2+) as cofactor.

Its subcellular location is the cytoplasm. The catalysed reaction is 3-methyl-2-oxobutanoate + (6R)-5,10-methylene-5,6,7,8-tetrahydrofolate + H2O = 2-dehydropantoate + (6S)-5,6,7,8-tetrahydrofolate. It participates in cofactor biosynthesis; (R)-pantothenate biosynthesis; (R)-pantoate from 3-methyl-2-oxobutanoate: step 1/2. In terms of biological role, catalyzes the reversible reaction in which hydroxymethyl group from 5,10-methylenetetrahydrofolate is transferred onto alpha-ketoisovalerate to form ketopantoate. The polypeptide is 3-methyl-2-oxobutanoate hydroxymethyltransferase (Bartonella bacilliformis (strain ATCC 35685 / KC583 / Herrer 020/F12,63)).